The primary structure comprises 538 residues: Putative cysteine ligase BshC (538 aa).

Residues 460–484 adopt a coiled-coil conformation; it reads KINEQIELLERMLKRNVEKKHEVEL.

This sequence belongs to the BshC family.

Its function is as follows. Involved in bacillithiol (BSH) biosynthesis. May catalyze the last step of the pathway, the addition of cysteine to glucosamine malate (GlcN-Mal) to generate BSH. In Bacillus cereus (strain AH187), this protein is Putative cysteine ligase BshC.